The primary structure comprises 262 residues: Hydroxyethylthiazole kinase (262 aa).

Met-50 contacts substrate. Positions 125 and 171 each coordinate ATP. Gly-198 contributes to the substrate binding site.

Belongs to the Thz kinase family. The cofactor is Mg(2+).

The enzyme catalyses 5-(2-hydroxyethyl)-4-methylthiazole + ATP = 4-methyl-5-(2-phosphooxyethyl)-thiazole + ADP + H(+). It functions in the pathway cofactor biosynthesis; thiamine diphosphate biosynthesis; 4-methyl-5-(2-phosphoethyl)-thiazole from 5-(2-hydroxyethyl)-4-methylthiazole: step 1/1. Catalyzes the phosphorylation of the hydroxyl group of 4-methyl-5-beta-hydroxyethylthiazole (THZ). The chain is Hydroxyethylthiazole kinase from Escherichia fergusonii (strain ATCC 35469 / DSM 13698 / CCUG 18766 / IAM 14443 / JCM 21226 / LMG 7866 / NBRC 102419 / NCTC 12128 / CDC 0568-73).